The chain runs to 344 residues: E3 ubiquitin-protein ligase RING2-A (344 aa).

An interaction with HIP2 region spans residues 2-181; it reads ATPVNAQCSS…EDNCDSRSHV (180 aa). Residues 48-88 form an RING-type zinc finger; sequence CPICLDMLKNTMTTKECLHRFCSDCIVTALRSGNKECPTCR. The tract at residues 90–95 is interaction with nucleosomes via an acidic patch on histone H2A and histone H2B; sequence KLVSKR. Positions 148 to 230 are disordered; that stretch reads QAMHRAQRVR…DPPGGGETGS (83 aa). A compositionally biased stretch (polar residues) spans 180–192; that stretch reads HVSNPSVHSNQEA.

In terms of assembly, component of chromatin-associated Polycomb (PcG) complexes. Component of a PRC1-like complex. Component of some MLL1/MLL complex.

The protein localises to the nucleus. It is found in the cytoplasm. It localises to the chromosome. It carries out the reaction S-ubiquitinyl-[E2 ubiquitin-conjugating enzyme]-L-cysteine + [acceptor protein]-L-lysine = [E2 ubiquitin-conjugating enzyme]-L-cysteine + N(6)-ubiquitinyl-[acceptor protein]-L-lysine.. It participates in protein modification; protein ubiquitination. In terms of biological role, E3 ubiquitin-protein ligase that mediates monoubiquitination of 'Lys-119' of histone H2A (H2AK119Ub), thereby playing a central role in histone code and gene regulation. H2AK119Ub gives a specific tag for epigenetic transcriptional repression. Essential component of a Polycomb group (PcG) multiprotein PRC1-like complex, a complex class required to maintain the transcriptionally repressive state of many genes, including Hox genes, throughout development. PcG PRC1 complex acts via chromatin remodeling and modification of histones, rendering chromatin heritably changed in its expressibility. The polypeptide is E3 ubiquitin-protein ligase RING2-A (rnf2-a) (Xenopus laevis (African clawed frog)).